The sequence spans 430 residues: Trigger factor (430 aa).

Residues 163-248 (GNIAIIDFKG…IKDIKVKELP (86 aa)) form the PPIase FKBP-type domain.

The protein belongs to the FKBP-type PPIase family. Tig subfamily.

The protein localises to the cytoplasm. The catalysed reaction is [protein]-peptidylproline (omega=180) = [protein]-peptidylproline (omega=0). Functionally, involved in protein export. Acts as a chaperone by maintaining the newly synthesized protein in an open conformation. Functions as a peptidyl-prolyl cis-trans isomerase. The protein is Trigger factor of Clostridium botulinum (strain Loch Maree / Type A3).